A 298-amino-acid chain; its full sequence is DNA-binding transcriptional activator HetR (298 aa).

Ser152 is a catalytic residue.

Belongs to the peptidase S48 family. As to quaternary structure, homodimer; disulfide-linked.

Controls heterocyst differentiation. Dimerization is required for DNA-binding. Has both a protease and a DNA-binding activity. In Nostoc sp. (strain PCC 9229), this protein is DNA-binding transcriptional activator HetR.